The following is a 340-amino-acid chain: Uroporphyrinogen decarboxylase (340 aa).

Residues 21 to 25, phenylalanine 40, aspartate 71, tyrosine 148, serine 203, and histidine 316 each bind substrate; that span reads RQAGR.

This sequence belongs to the uroporphyrinogen decarboxylase family. Homodimer.

The protein resides in the cytoplasm. The catalysed reaction is uroporphyrinogen III + 4 H(+) = coproporphyrinogen III + 4 CO2. The protein operates within porphyrin-containing compound metabolism; protoporphyrin-IX biosynthesis; coproporphyrinogen-III from 5-aminolevulinate: step 4/4. Functionally, catalyzes the decarboxylation of four acetate groups of uroporphyrinogen-III to yield coproporphyrinogen-III. This Campylobacter jejuni subsp. jejuni serotype O:2 (strain ATCC 700819 / NCTC 11168) protein is Uroporphyrinogen decarboxylase.